The sequence spans 647 residues: Protein INVOLVED IN DE NOVO 2 (647 aa).

Disordered regions lie at residues 1-20 and 101-123; these read MGST…SESE and SASE…DCDH. Acidic residues predominate over residues 9–20; that stretch reads SDDEDSDISESE. Residues 253 to 508 adopt a coiled-coil conformation; that stretch reads IAELTEEEAR…NIMKEWNTNI (256 aa).

Interacts with FMD1/IDNL1. Forms a complex with FMD1/IDNL1 and FMD2/INDL2. Can form homodimers. Interacts with MORC6.

Forms a complex with FDM1/IDNL1 and FDM2/IDNL2 that is required for RNA-directed DNA methylation (RdDM) and that functions at a downstream step of the RdDM pathway and downstream of small interfering RNA (siRNA) formation. Required for de novo DNA methylation, siRNA accumulation and siRNA-mediated maintenance methylation. Required for several post-transcriptional gene silencing pathways. Binds double-stranded RNAs (dsRNAs) with 5'-overhangs through its XS domain. Binds long non-coding RNA (lncRNA) in an AGO4-dependent manner and associates with DRM2, resulting in DNA methylation of RdDM target loci. Mediates the silencing of a subset of MORC6 target loci. In Arabidopsis thaliana (Mouse-ear cress), this protein is Protein INVOLVED IN DE NOVO 2.